We begin with the raw amino-acid sequence, 995 residues long: UPF0182 protein MUL_2505 (995 aa).

Helical transmembrane passes span 18-38 (VLIL…RLID), 63-83 (FLVF…GLAL), 113-133 (LFGI…AQSY), 175-195 (FVAI…FGGI), 210-230 (IQLV…YWLN), 259-279 (KLIL…AIVL), and 287-307 (IGLV…PMIV). The tract at residues 900–947 (AATGIQPTEGGAPANVPPNNAPSPEALPGTPPSPPTAVPPAPEASVTL) is disordered. Residues 928–941 (GTPPSPPTAVPPAP) show a composition bias toward pro residues.

It belongs to the UPF0182 family.

The protein localises to the cell membrane. This Mycobacterium ulcerans (strain Agy99) protein is UPF0182 protein MUL_2505.